The chain runs to 147 residues: Large ribosomal subunit protein uL15 (147 aa).

Over residues 1-13 (MKLENLKSKEGSR) the composition is skewed to basic and acidic residues. The tract at residues 1 to 54 (MKLENLKSKEGSRHKTKRVGRGFGSGIGKTSTRGSKGQKSRKSGHTRPGFEGGQ) is disordered. Residues 36 to 45 (KGQKSRKSGH) are compositionally biased toward basic residues.

It belongs to the universal ribosomal protein uL15 family. Part of the 50S ribosomal subunit.

Its function is as follows. Binds to the 23S rRNA. The polypeptide is Large ribosomal subunit protein uL15 (Malacoplasma penetrans (strain HF-2) (Mycoplasma penetrans)).